The chain runs to 269 residues: Type II iodothyronine deiodinase (269 aa).

At 1 to 9 (MGILSVDLL) the chain is on the lumenal side. A helical; Signal-anchor for type III membrane protein membrane pass occupies residues 10-34 (ITLQILPVFFSNCLFLALYDSVILL). Residues 35-269 (KHVVLLLSRS…KNFSKRUKKT (235 aa)) lie on the Cytoplasmic side of the membrane. The active site involves Sec-133. 2 non-standard amino acids (selenocysteine) are found at residues Sec-133 and Sec-266.

Belongs to the iodothyronine deiodinase family. As to quaternary structure, predominantly monomer. Can form homodimers but homodimerization is not essential for enzyme activity. Interacts with USP20 and USP33. Interacts with MARCHF6. Ubiquitinated by MARCHF6, leading to its degradation by the proteasome. Deubiquitinated by USP20 and USP33. More expressed in pituitary than in brain, low to undetectable levels in thyroid and skeletal muscle.

Its subcellular location is the endoplasmic reticulum membrane. The catalysed reaction is 3,3',5-triiodo-L-thyronine + iodide + A + H(+) = L-thyroxine + AH2. It catalyses the reaction 3,3'-diiodo-L-thyronine + iodide + A + H(+) = 3,3',5'-triiodo-L-thyronine + AH2. It carries out the reaction 3'-iodo-L-thyronine + iodide + A + H(+) = 3',5'-diiodo-L-thyronine + AH2. The enzyme catalyses 3,3'-diiodothyronamine + iodide + A + H(+) = 3,3',5'-triiodothyronamine + AH2. The catalysed reaction is 3'-iodothyronamine + iodide + A + H(+) = 3',5'-diiodothyronamine + AH2. Functionally, plays a crucial role in the metabolism of thyroid hormones (TH) and has specific roles in TH activation and inactivation by deiodination.Catalyzes the deiodination of L-thyroxine (T4) to 3,5,3'-triiodothyronine (T3) and 3,3',5'-triiodothyronine (rT3) to 3,3'-diiodothyronine (3,3'-T2) via outer-ring deiodination (ORD). Catalyzes the deiodination of 3',5'-diiodothyronine (3',5'-T2) to 3'-monoiodothyronine (3'-T1) via ORD. Catalyzes the phenolic ring deiodinations of 3,3',5'-triiodothyronamine and 3',5'- diiodothyronamine. This chain is Type II iodothyronine deiodinase (DIO2), found in Sus scrofa (Pig).